Here is a 764-residue protein sequence, read N- to C-terminus: Putative wall-associated receptor kinase-like 13 (764 aa).

A signal peptide spans 1-26; the sequence is MRGNKNYYFLSLLYFLSLPILHFSSC. At 27–379 the chain is on the extracellular side; it reads THKCGDIQIP…HRCIDYHIPE (353 aa). 8 N-linked (GlcNAc...) asparagine glycosylation sites follow: asparagine 78, asparagine 114, asparagine 121, asparagine 164, asparagine 233, asparagine 238, asparagine 259, and asparagine 283. Residues 308-372 form an atypical EGF-like region; the sequence is CTCDNHIASG…CINTSGGHRC (65 aa). Disulfide bonds link cysteine 310–cysteine 323, cysteine 345–cysteine 363, and cysteine 352–cysteine 372. An N-linked (GlcNAc...) asparagine glycan is attached at asparagine 365. A helical membrane pass occupies residues 380 to 400; the sequence is VMLGLGAGFFVLIVGGGIWWW. The Cytoplasmic portion of the chain corresponds to 401 to 764; it reads RKLLRKRRMT…SGSTEIARSM (364 aa). In terms of domain architecture, Protein kinase spans 454-728; sequence FNDNRVIGQG…REVSTALERI (275 aa). Residues 460 to 468 and lysine 482 contribute to the ATP site; that span reads IGQGGQGTV. At tyrosine 527 the chain carries Phosphotyrosine. Aspartate 579 functions as the Proton acceptor in the catalytic mechanism. Residues threonine 613 and threonine 618 each carry the phosphothreonine modification. The residue at position 626 (tyrosine 626) is a Phosphotyrosine.

The protein belongs to the protein kinase superfamily. Ser/Thr protein kinase family.

It is found in the membrane. The catalysed reaction is L-seryl-[protein] + ATP = O-phospho-L-seryl-[protein] + ADP + H(+). The enzyme catalyses L-threonyl-[protein] + ATP = O-phospho-L-threonyl-[protein] + ADP + H(+). In terms of biological role, putative serine/threonine-protein kinase that may function as a signaling receptor of extracellular matrix component. In Arabidopsis thaliana (Mouse-ear cress), this protein is Putative wall-associated receptor kinase-like 13 (WAKL13).